The chain runs to 261 residues: Cytochrome c oxidase subunit 3 (261 aa).

The Mitochondrial matrix portion of the chain corresponds to 1-15 (MTHQTHAYHMVDPSP). Residues 16 to 34 (WPLTGALSALLMTSGLTMW) form a helical membrane-spanning segment. Residues 35-40 (FHYHSV) are Mitochondrial intermembrane-facing. A helical membrane pass occupies residues 41-66 (VLLFLGLMTNTLTMFQWWRDVVREGT). Residues 67-72 (FQGHHT) lie on the Mitochondrial matrix side of the membrane. The helical transmembrane segment at 73–105 (PVVQEGLRYGMILFITSEVLFFTGFFWAFYHSS) threads the bilayer. Residues 106–128 (LAPTPELGSYWPPVGVYPLNPLE) are Mitochondrial intermembrane-facing. A helical membrane pass occupies residues 129–152 (VPLLNTSVLLASGVTITWAHHSLM). Residues 153 to 155 (EGN) lie on the Mitochondrial matrix side of the membrane. A helical membrane pass occupies residues 156 to 183 (RKNMLQALLITILLGVYFTLLQMFEYYE). At 184–190 (ASFTISD) the chain is on the mitochondrial intermembrane side. Residues 191 to 223 (GIYGSTFFVTTGFHGLHVIIGSTFLLTCFIRQL) traverse the membrane as a helical segment. The Mitochondrial matrix portion of the chain corresponds to 224 to 232 (KFHFTSNHH). A helical transmembrane segment spans residues 233–256 (FGFEAAAWYWHFVDVVWLFLYLSI). At 257–261 (YWWGS) the chain is on the mitochondrial intermembrane side.

Belongs to the cytochrome c oxidase subunit 3 family. As to quaternary structure, component of the cytochrome c oxidase (complex IV, CIV), a multisubunit enzyme composed of 14 subunits. The complex is composed of a catalytic core of 3 subunits MT-CO1, MT-CO2 and MT-CO3, encoded in the mitochondrial DNA, and 11 supernumerary subunits COX4I, COX5A, COX5B, COX6A, COX6B, COX6C, COX7A, COX7B, COX7C, COX8 and NDUFA4, which are encoded in the nuclear genome. The complex exists as a monomer or a dimer and forms supercomplexes (SCs) in the inner mitochondrial membrane with NADH-ubiquinone oxidoreductase (complex I, CI) and ubiquinol-cytochrome c oxidoreductase (cytochrome b-c1 complex, complex III, CIII), resulting in different assemblies (supercomplex SCI(1)III(2)IV(1) and megacomplex MCI(2)III(2)IV(2)).

Its subcellular location is the mitochondrion inner membrane. The enzyme catalyses 4 Fe(II)-[cytochrome c] + O2 + 8 H(+)(in) = 4 Fe(III)-[cytochrome c] + 2 H2O + 4 H(+)(out). In terms of biological role, component of the cytochrome c oxidase, the last enzyme in the mitochondrial electron transport chain which drives oxidative phosphorylation. The respiratory chain contains 3 multisubunit complexes succinate dehydrogenase (complex II, CII), ubiquinol-cytochrome c oxidoreductase (cytochrome b-c1 complex, complex III, CIII) and cytochrome c oxidase (complex IV, CIV), that cooperate to transfer electrons derived from NADH and succinate to molecular oxygen, creating an electrochemical gradient over the inner membrane that drives transmembrane transport and the ATP synthase. Cytochrome c oxidase is the component of the respiratory chain that catalyzes the reduction of oxygen to water. Electrons originating from reduced cytochrome c in the intermembrane space (IMS) are transferred via the dinuclear copper A center (CU(A)) of subunit 2 and heme A of subunit 1 to the active site in subunit 1, a binuclear center (BNC) formed by heme A3 and copper B (CU(B)). The BNC reduces molecular oxygen to 2 water molecules using 4 electrons from cytochrome c in the IMS and 4 protons from the mitochondrial matrix. The polypeptide is Cytochrome c oxidase subunit 3 (MT-CO3) (Mammuthus primigenius (Siberian woolly mammoth)).